The primary structure comprises 122 residues: Serum amyloid A-1 protein (122 aa).

Residues 1 to 19 (MKLLSGLLLCSLVLGVSSQ) form the signal peptide. The important for amyloid formation stretch occupies residues 20–45 (RWFSFIGEATQGAWDMWRAYSDMREA). Positions 87–122 (MGHGAEDSMADQAANEWGRSGKDPNHFRPKGLPDKY) are disordered. Positions 105–122 (RSGKDPNHFRPKGLPDKY) are enriched in basic and acidic residues.

The protein belongs to the SAA family. As to quaternary structure, homohexamer; dimer of trimers. Can form amyloid fibrils after partial proteolysis; the native, undenatured protein does not form amyloid fibrils (in vitro). Apolipoprotein of the HDL complex. Binds to heparin. In terms of tissue distribution, detected in liver.

Its subcellular location is the secreted. In terms of biological role, major acute phase protein. In Oryctolagus cuniculus (Rabbit), this protein is Serum amyloid A-1 protein (SAA1).